The primary structure comprises 1408 residues: Protein patched homolog 1 (1408 aa).

Residues 1 to 20 (MLTLLEPPGAKRSPTVGNYN) are disordered. Residues 1 to 136 (MLTLLEPPGA…GNTVHRNAWS (136 aa)) lie on the Cytoplasmic side of the membrane. A helical membrane pass occupies residues 137–157 (IILAVSMIFAVCCYGLQYVHI). Residues 158–649 (ETDIVKLWVA…STSIADMLEE (492 aa)) lie on the Extracellular side of the membrane. The segment at 455 to 479 (STAPIPTTTTLSPEEARAAEEKEKK) is disordered. Over residues 468–479 (EEARAAEEKEKK) the composition is skewed to basic and acidic residues. An N-linked (GlcNAc...) asparagine glycan is attached at N599. The helical transmembrane segment at 650 to 670 (FCQFNYTIILAGYALMLAYAI) threads the bilayer. The SSD domain maps to 654-816 (NYTIILAGYA…LTIYPAIISI (163 aa)). Residues 671 to 686 (VTQARFDNCLPATESS) lie on the Cytoplasmic side of the membrane. Residues 687-707 (MGLALAGVLVVTFASVAGLGL) form a helical membrane-spanning segment. The Extracellular portion of the chain corresponds to 708–709 (AT). Residues 710 to 730 (WFGIEFNAATTQIVPFLTLGI) traverse the membrane as a helical segment. Over 731 to 765 (GVDNMFMLLHNYRDVVKLAGGHAEMAILMRETGMS) the chain is Cytoplasmic. A helical membrane pass occupies residues 766 to 786 (ILCTSINNILSFLTGTLLPIP). Over 787–795 (ALRSFCAQS) the chain is Extracellular. The helical transmembrane segment at 796–816 (SILLTFNFIAILTIYPAIISI) threads the bilayer. The Cytoplasmic segment spans residues 817–901 (DLRRKKAQRR…YYYIPFISKP (85 aa)). The chain crosses the membrane as a helical span at residues 902–922 (ASKVAIIVGCCALLGASFIGM). The Extracellular portion of the chain corresponds to 923–1175 (RQSTLGLELG…QGIAFTFWEQ (253 aa)). N1026 and N1036 each carry an N-linked (GlcNAc...) asparagine glycan. Residues 1176 to 1196 (YLFLTGNLMQAISIITISVFC) form a helical membrane-spanning segment. The Cytoplasmic segment spans residues 1197–1217 (VISVLLFNPWAALMVVCILGI). A run of 2 helical transmembrane segments spans residues 1218 to 1238 (MTCELAGFMGLVGIKLNPVSA) and 1239 to 1259 (VTLITAVGIGVEFTVHVVVSF). Residues 1260 to 1276 (LTALGTRSQRTSSAVDR) are Extracellular-facing. The chain crosses the membrane as a helical span at residues 1277-1297 (VFVPVIHGSFSTLLGILMLGF). Residues 1298 to 1305 (SEFEFVVK) are Cytoplasmic-facing. A helical membrane pass occupies residues 1306 to 1326 (YFFIVMTALICIGIINGLILL). The Extracellular portion of the chain corresponds to 1327 to 1408 (PVLLSWFGPR…GNNTRRLPAV (82 aa)). The segment at 1342–1408 (TGGKTTLTLP…GNNTRRLPAV (67 aa)) is disordered. Residues 1387–1408 (TTRTSGGNRGTVGNNTRRLPAV) show a composition bias toward low complexity.

This sequence belongs to the patched family. In terms of tissue distribution, germ line and its progenitors.

It localises to the membrane. Functionally, required but not essential for cytokinesis of mitotically proliferating germ cells. The sequence is that of Protein patched homolog 1 (ptc-1) from Caenorhabditis elegans.